The sequence spans 204 residues: uncharacterized protein (204 aa).

Cys-52 acts as the Acyl-thioester intermediate in catalysis. Catalysis depends on residues His-89 and Asp-104.

This sequence belongs to the arylamine N-acetyltransferase family.

This is an uncharacterized protein from Acanthamoeba polyphaga mimivirus (APMV).